A 127-amino-acid chain; its full sequence is Large ribosomal subunit protein uL22 (127 aa).

It belongs to the universal ribosomal protein uL22 family. As to quaternary structure, part of the 50S ribosomal subunit.

This protein binds specifically to 23S rRNA; its binding is stimulated by other ribosomal proteins, e.g. L4, L17, and L20. It is important during the early stages of 50S assembly. It makes multiple contacts with different domains of the 23S rRNA in the assembled 50S subunit and ribosome. Functionally, the globular domain of the protein is located near the polypeptide exit tunnel on the outside of the subunit, while an extended beta-hairpin is found that lines the wall of the exit tunnel in the center of the 70S ribosome. This Brucella suis (strain ATCC 23445 / NCTC 10510) protein is Large ribosomal subunit protein uL22.